A 426-amino-acid polypeptide reads, in one-letter code: Serine--tRNA ligase (426 aa).

The interval 36–66 (KRKHLQERTQDLQSQRNTISKEIGQKKAKGE) is disordered. Residues 46–55 (DLQSQRNTIS) show a composition bias toward polar residues. 233-235 (TAE) lines the L-serine pocket. 264–266 (RSE) serves as a coordination point for ATP. Position 287 (E287) interacts with L-serine. An ATP-binding site is contributed by 351-354 (EISS). L-serine is bound at residue S387.

This sequence belongs to the class-II aminoacyl-tRNA synthetase family. Type-1 seryl-tRNA synthetase subfamily. As to quaternary structure, homodimer. The tRNA molecule binds across the dimer.

Its subcellular location is the cytoplasm. The enzyme catalyses tRNA(Ser) + L-serine + ATP = L-seryl-tRNA(Ser) + AMP + diphosphate + H(+). It carries out the reaction tRNA(Sec) + L-serine + ATP = L-seryl-tRNA(Sec) + AMP + diphosphate + H(+). It functions in the pathway aminoacyl-tRNA biosynthesis; selenocysteinyl-tRNA(Sec) biosynthesis; L-seryl-tRNA(Sec) from L-serine and tRNA(Sec): step 1/1. Its function is as follows. Catalyzes the attachment of serine to tRNA(Ser). Is also able to aminoacylate tRNA(Sec) with serine, to form the misacylated tRNA L-seryl-tRNA(Sec), which will be further converted into selenocysteinyl-tRNA(Sec). In Francisella tularensis subsp. holarctica (strain FTNF002-00 / FTA), this protein is Serine--tRNA ligase.